Reading from the N-terminus, the 604-residue chain is Serine/threonine-protein kinase A-Raf (604 aa).

The 73-residue stretch at Gly19–Leu91 folds into the RBD domain. A Phorbol-ester/DAG-type zinc finger spans residues Met98–Cys144. Residues His99, Cys112, Cys115, Cys125, Cys128, His133, Cys136, and Cys144 each contribute to the Zn(2+) site. Phosphoserine is present on residues Ser157 and Ser162. 2 disordered regions span residues Glu178–Ser222 and Thr241–Lys287. A Phosphothreonine modification is found at Thr181. At Ser186 the chain carries Phosphoserine. Residues Ile210 to Ser222 show a composition bias toward polar residues. The segment covering Pro252–Arg265 has biased composition (low complexity). Ser255 and Ser267 each carry phosphoserine. Basic and acidic residues predominate over residues Leu272–Lys287. The Protein kinase domain occupies Val308–Leu568. ATP contacts are provided by residues Ile314–Val322 and Lys334. The residue at position 316 (Thr316) is a Phosphothreonine. Asp427 serves as the catalytic Proton acceptor.

Belongs to the protein kinase superfamily. TKL Ser/Thr protein kinase family. RAF subfamily. In terms of assembly, interacts with TH1L/NELFD. The cofactor is Zn(2+). Dephosphorylation by the SHOC2-MRAS-PP1c (SMP) complex consisting of SHOC2, GTP-bound M-Ras/MRAS and the catalytic subunit of protein phosphatase 1 (PPP1CA, PPP1CB or PPP1CC); this relieves inactivation and stimulates kinase activity.

It catalyses the reaction L-seryl-[protein] + ATP = O-phospho-L-seryl-[protein] + ADP + H(+). It carries out the reaction L-threonyl-[protein] + ATP = O-phospho-L-threonyl-[protein] + ADP + H(+). In terms of biological role, involved in the transduction of mitogenic signals from the cell membrane to the nucleus. May also regulate the TOR signaling cascade. Phosphorylates PFKFB2. This Rattus norvegicus (Rat) protein is Serine/threonine-protein kinase A-Raf (Araf).